A 289-amino-acid chain; its full sequence is mRNA-capping enzyme small subunit (289 aa).

As to quaternary structure, heterodimer of a large and a small subunit.

Its subcellular location is the virion. The enzyme catalyses a 5'-end (5'-triphosphoguanosine)-ribonucleoside in mRNA + S-adenosyl-L-methionine = a 5'-end (N(7)-methyl 5'-triphosphoguanosine)-ribonucleoside in mRNA + S-adenosyl-L-homocysteine. Catalyzes the last reaction in the mRNA cap formation pathway. The sequence is that of mRNA-capping enzyme small subunit from Fowlpox virus (strain NVSL) (FPV).